Here is a 447-residue protein sequence, read N- to C-terminus: Glycogen synthase (447 aa).

R15 contributes to the ADP-alpha-D-glucose binding site.

This sequence belongs to the glycosyltransferase 1 family. Bacterial/plant glycogen synthase subfamily.

It carries out the reaction [(1-&gt;4)-alpha-D-glucosyl](n) + ADP-alpha-D-glucose = [(1-&gt;4)-alpha-D-glucosyl](n+1) + ADP + H(+). Its pathway is glycan biosynthesis; glycogen biosynthesis. Functionally, synthesizes alpha-1,4-glucan chains using ADP-glucose. This is Glycogen synthase from Deinococcus geothermalis (strain DSM 11300 / CIP 105573 / AG-3a).